The primary structure comprises 335 residues: Dihydroorotate dehydrogenase (quinone) (335 aa).

FMN contacts are provided by residues 59 to 63 (AGADK) and Thr83. Lys63 provides a ligand contact to substrate. Substrate is bound at residue 108 to 112 (NRNGF). Asn136 and Asn169 together coordinate FMN. Residue Asn169 participates in substrate binding. The active-site Nucleophile is the Ser172. Asn174 is a substrate binding site. Lys214 and Gly242 together coordinate FMN. 243-244 (NT) serves as a coordination point for substrate. FMN is bound by residues Gly265, Gly294, and 315–316 (YS).

Belongs to the dihydroorotate dehydrogenase family. Type 2 subfamily. In terms of assembly, monomer. FMN serves as cofactor.

Its subcellular location is the cell membrane. It catalyses the reaction (S)-dihydroorotate + a quinone = orotate + a quinol. It functions in the pathway pyrimidine metabolism; UMP biosynthesis via de novo pathway; orotate from (S)-dihydroorotate (quinone route): step 1/1. Its function is as follows. Catalyzes the conversion of dihydroorotate to orotate with quinone as electron acceptor. The chain is Dihydroorotate dehydrogenase (quinone) from Glaesserella parasuis serovar 5 (strain SH0165) (Haemophilus parasuis).